The chain runs to 91 residues: Transcriptional repressor FrmR (91 aa).

This sequence belongs to the FrmR/RcnR family. As to quaternary structure, homotetramer.

The protein resides in the cytoplasm. In terms of biological role, formaldehyde sensor. In the absence of formaldehyde, mediates repression of the frmRAB operon. Acts by binding directly to the frmRAB promoter region. In the presence of formaldehyde, it dissociates from the frmRAB promoter region and allows expression of the formaldehyde detoxification system encoded by frmA and frmB. This chain is Transcriptional repressor FrmR, found in Escherichia coli (strain UTI89 / UPEC).